A 257-amino-acid polypeptide reads, in one-letter code: DNA repair protein RecO (257 aa).

Belongs to the RecO family.

Involved in DNA repair and RecF pathway recombination. In Clostridium kluyveri (strain ATCC 8527 / DSM 555 / NBRC 12016 / NCIMB 10680 / K1), this protein is DNA repair protein RecO.